The sequence spans 339 residues: Ketol-acid reductoisomerase (NADP(+)) (339 aa).

Positions 1-182 constitute a KARI N-terminal Rossmann domain; it reads MRVYYDRDAD…GGGRSGIIET (182 aa). NADP(+) contacts are provided by residues 24–27, K48, S51, T53, and 83–86; these read YGSQ and DELQ. H108 is an active-site residue. G134 is a binding site for NADP(+). The region spanning 183–328 is the KARI C-terminal knotted domain; the sequence is NFREECETDL…AKLRGMMPWI (146 aa). Residues D191, E195, E227, and E231 each contribute to the Mg(2+) site. S252 provides a ligand contact to substrate.

The protein belongs to the ketol-acid reductoisomerase family. Mg(2+) serves as cofactor.

It catalyses the reaction (2R)-2,3-dihydroxy-3-methylbutanoate + NADP(+) = (2S)-2-acetolactate + NADPH + H(+). The catalysed reaction is (2R,3R)-2,3-dihydroxy-3-methylpentanoate + NADP(+) = (S)-2-ethyl-2-hydroxy-3-oxobutanoate + NADPH + H(+). The protein operates within amino-acid biosynthesis; L-isoleucine biosynthesis; L-isoleucine from 2-oxobutanoate: step 2/4. It functions in the pathway amino-acid biosynthesis; L-valine biosynthesis; L-valine from pyruvate: step 2/4. Involved in the biosynthesis of branched-chain amino acids (BCAA). Catalyzes an alkyl-migration followed by a ketol-acid reduction of (S)-2-acetolactate (S2AL) to yield (R)-2,3-dihydroxy-isovalerate. In the isomerase reaction, S2AL is rearranged via a Mg-dependent methyl migration to produce 3-hydroxy-3-methyl-2-ketobutyrate (HMKB). In the reductase reaction, this 2-ketoacid undergoes a metal-dependent reduction by NADPH to yield (R)-2,3-dihydroxy-isovalerate. In Rhizobium rhizogenes (strain K84 / ATCC BAA-868) (Agrobacterium radiobacter), this protein is Ketol-acid reductoisomerase (NADP(+)).